Consider the following 560-residue polypeptide: CTP synthase (560 aa).

Residues 1-272 form an amidoligase domain region; sequence MSIGDVCSAR…DTQILSHFGM (272 aa). A CTP-binding site is contributed by Ser20. Ser20 lines the UTP pocket. Residues 21 to 26 and Asp78 each bind ATP; that span reads SLGKGL. Residues Asp78 and Glu146 each coordinate Mg(2+). CTP is bound by residues 153–155, 193–198, and Lys229; these read DIE and KTKPTQ. Residues 193–198 and Lys229 contribute to the UTP site; that span reads KTKPTQ. The Glutamine amidotransferase type-1 domain occupies 297–539; sequence TIAIIGKYTK…VQNVLQIKQR (243 aa). Gly356 contributes to the L-glutamine binding site. Cys383 acts as the Nucleophile; for glutamine hydrolysis in catalysis. Residues 384–387, Glu407, and Arg467 each bind L-glutamine; that span reads MGMQ. Catalysis depends on residues His512 and Glu514.

It belongs to the CTP synthase family. In terms of assembly, homotetramer.

It carries out the reaction UTP + L-glutamine + ATP + H2O = CTP + L-glutamate + ADP + phosphate + 2 H(+). The catalysed reaction is L-glutamine + H2O = L-glutamate + NH4(+). The enzyme catalyses UTP + NH4(+) + ATP = CTP + ADP + phosphate + 2 H(+). Its pathway is pyrimidine metabolism; CTP biosynthesis via de novo pathway; CTP from UDP: step 2/2. With respect to regulation, allosterically activated by GTP, when glutamine is the substrate; GTP has no effect on the reaction when ammonia is the substrate. The allosteric effector GTP functions by stabilizing the protein conformation that binds the tetrahedral intermediate(s) formed during glutamine hydrolysis. Inhibited by the product CTP, via allosteric rather than competitive inhibition. Catalyzes the ATP-dependent amination of UTP to CTP with either L-glutamine or ammonia as the source of nitrogen. Regulates intracellular CTP levels through interactions with the four ribonucleotide triphosphates. The chain is CTP synthase from Anaplasma marginale (strain Florida).